Here is a 185-residue protein sequence, read N- to C-terminus: Ribosome-recycling factor (185 aa).

The protein belongs to the RRF family.

It localises to the cytoplasm. In terms of biological role, responsible for the release of ribosomes from messenger RNA at the termination of protein biosynthesis. May increase the efficiency of translation by recycling ribosomes from one round of translation to another. The chain is Ribosome-recycling factor from Pseudomonas putida (strain W619).